A 371-amino-acid chain; its full sequence is Cytochrome b (371 aa).

Transmembrane regions (helical) follow at residues 25 to 45 (FGSM…FLAI), 69 to 90 (WTMQ…YTHI), 105 to 125 (WLSG…GYVL), and 170 to 190 (FFAL…VHII). The heme b site is built by His75 and His89. 2 residues coordinate heme b: His174 and His188. His193 provides a ligand contact to a ubiquinone. A run of 4 helical transmembrane segments spans residues 218–238 (YKDM…MSFS), 280–300 (LGGT…PFTH), 312–332 (FTQL…WTAT), and 339–358 (FILI…IINP).

It belongs to the cytochrome b family. In terms of assembly, the cytochrome bc1 complex contains 3 respiratory subunits (MT-CYB, CYC1 and UQCRFS1), 2 core proteins (UQCRC1 and UQCRC2) and probably 6 low-molecular weight proteins. The cofactor is heme b.

Its subcellular location is the mitochondrion inner membrane. Functionally, component of the ubiquinol-cytochrome c reductase complex (complex III or cytochrome b-c1 complex) that is part of the mitochondrial respiratory chain. The b-c1 complex mediates electron transfer from ubiquinol to cytochrome c. Contributes to the generation of a proton gradient across the mitochondrial membrane that is then used for ATP synthesis. This is Cytochrome b (MT-CYB) from Elapognathus coronatus (Western crowned snake).